A 296-amino-acid chain; its full sequence is 4-hydroxybenzoate octaprenyltransferase (296 aa).

8 helical membrane-spanning segments follow: residues 22–42, 46–66, 99–121, 139–159, 163–183, 211–231, 238–258, and 270–290; these read PIGI…SALG, WIVV…GCVI, LFAG…LVIW, FFAI…PMAY, LGEV…WAVA, FDVA…GGIG, PAFY…YTWI, and FLHN…DFLV.

The protein belongs to the UbiA prenyltransferase family. It depends on Mg(2+) as a cofactor.

It is found in the cell inner membrane. It carries out the reaction all-trans-octaprenyl diphosphate + 4-hydroxybenzoate = 4-hydroxy-3-(all-trans-octaprenyl)benzoate + diphosphate. It participates in cofactor biosynthesis; ubiquinone biosynthesis. Its function is as follows. Catalyzes the prenylation of para-hydroxybenzoate (PHB) with an all-trans polyprenyl group. Mediates the second step in the final reaction sequence of ubiquinone-8 (UQ-8) biosynthesis, which is the condensation of the polyisoprenoid side chain with PHB, generating the first membrane-bound Q intermediate 3-octaprenyl-4-hydroxybenzoate. This is 4-hydroxybenzoate octaprenyltransferase from Dechloromonas aromatica (strain RCB).